Consider the following 212-residue polypeptide: MFAEYGVLNYWTYLVGAIFIVLVPGPNTLFVLKNSVSSGMKGGYLAACGVFIGDAVLMFLAWAGVATLIKTTPILFNIVRYLGAFYLLYLGSKILYATLKGKNNEAKSDEPQYGAIFKRALILSLTNPKAILFYVSFFVQFIDVNAPHTGISFFILATTLELVSFCYLSFLIISGAFVTQYIRTKKKLAKVGNSLIGLMFVGFAARLATLQS.

Helical transmembrane passes span 12–32 (TYLV…LFVL), 49–69 (GVFI…ATLI), 71–91 (TTPI…LYLG), 122–142 (ILSL…VQFI), 153–173 (FFIL…FLII), and 188–208 (LAKV…ARLA).

The protein belongs to the Rht family.

Its subcellular location is the cell inner membrane. The catalysed reaction is L-leucine(in) + H(+)(out) = L-leucine(out) + H(+)(in). In terms of biological role, exporter of leucine. The chain is Leucine efflux protein (leuE) from Shigella sonnei (strain Ss046).